The following is a 251-amino-acid chain: Ubiquinone/menaquinone biosynthesis C-methyltransferase UbiE (251 aa).

Residues T74, D95, N123–A124, and S140 contribute to the S-adenosyl-L-methionine site.

It belongs to the class I-like SAM-binding methyltransferase superfamily. MenG/UbiE family.

The catalysed reaction is a 2-demethylmenaquinol + S-adenosyl-L-methionine = a menaquinol + S-adenosyl-L-homocysteine + H(+). It carries out the reaction a 2-methoxy-6-(all-trans-polyprenyl)benzene-1,4-diol + S-adenosyl-L-methionine = a 5-methoxy-2-methyl-3-(all-trans-polyprenyl)benzene-1,4-diol + S-adenosyl-L-homocysteine + H(+). It functions in the pathway quinol/quinone metabolism; menaquinone biosynthesis; menaquinol from 1,4-dihydroxy-2-naphthoate: step 2/2. It participates in cofactor biosynthesis; ubiquinone biosynthesis. In terms of biological role, methyltransferase required for the conversion of demethylmenaquinol (DMKH2) to menaquinol (MKH2) and the conversion of 2-polyprenyl-6-methoxy-1,4-benzoquinol (DDMQH2) to 2-polyprenyl-3-methyl-6-methoxy-1,4-benzoquinol (DMQH2). The sequence is that of Ubiquinone/menaquinone biosynthesis C-methyltransferase UbiE from Photorhabdus laumondii subsp. laumondii (strain DSM 15139 / CIP 105565 / TT01) (Photorhabdus luminescens subsp. laumondii).